Here is a 248-residue protein sequence, read N- to C-terminus: Adenosylcobinamide-GDP ribazoletransferase (248 aa).

The next 7 membrane-spanning stretches (helical) occupy residues 24–44 (EINL…IGAW), 70–90 (IIIT…GLFS), 106–126 (VGAN…SLFL), 134–154 (IGWL…LLFA), 168–188 (IFLG…LVAL), 189–209 (GAFF…FTII), and 228–248 (AGGQ…WGLI).

Belongs to the CobS family. Mg(2+) serves as cofactor.

It localises to the cell membrane. It catalyses the reaction alpha-ribazole + adenosylcob(III)inamide-GDP = adenosylcob(III)alamin + GMP + H(+). The enzyme catalyses alpha-ribazole 5'-phosphate + adenosylcob(III)inamide-GDP = adenosylcob(III)alamin 5'-phosphate + GMP + H(+). It participates in cofactor biosynthesis; adenosylcobalamin biosynthesis; adenosylcobalamin from cob(II)yrinate a,c-diamide: step 7/7. Joins adenosylcobinamide-GDP and alpha-ribazole to generate adenosylcobalamin (Ado-cobalamin). Also synthesizes adenosylcobalamin 5'-phosphate from adenosylcobinamide-GDP and alpha-ribazole 5'-phosphate. The chain is Adenosylcobinamide-GDP ribazoletransferase from Listeria monocytogenes serotype 4b (strain F2365).